The sequence spans 88 residues: Small ribosomal subunit protein bS20 (88 aa).

This sequence belongs to the bacterial ribosomal protein bS20 family.

Binds directly to 16S ribosomal RNA. The protein is Small ribosomal subunit protein bS20 of Legionella pneumophila (strain Paris).